The sequence spans 330 residues: MKSQPVTQELHFIFPLFKTISSDIMSFLVSIAGIAMLAQIVLGTFANVFIVLVTCTDCIRRRKLFLADGILTSLAFCRIGMLWVILISWCSIVFHQALSLQVRFSICVGWAVTNHFNMWLATILSILYLLKIGNFSNLIFLGLKRKIKSVFIVVLLASLVLLFPNLITVTVCETVQANGYRGNLTGKTKRTYFMNLTAMISFTLDNIISFTISMVCFLLLIYSLCKHLRTMRLYGKGPHNPSASAHIKALQAVISFLLLFSMFILSLIISGYNYMKPLNEPVHLICQLIGTLYPSSHSYVLLWGNRRIKLAFVLAMVQVRARLWLKEEKP.

At 1 to 32 (MKSQPVTQELHFIFPLFKTISSDIMSFLVSIA) the chain is on the extracellular side. A helical membrane pass occupies residues 33–53 (GIAMLAQIVLGTFANVFIVLV). Over 54–73 (TCTDCIRRRKLFLADGILTS) the chain is Cytoplasmic. The chain crosses the membrane as a helical span at residues 74 to 94 (LAFCRIGMLWVILISWCSIVF). Residues 95–122 (HQALSLQVRFSICVGWAVTNHFNMWLAT) lie on the Extracellular side of the membrane. A helical membrane pass occupies residues 123–143 (ILSILYLLKIGNFSNLIFLGL). The Cytoplasmic portion of the chain corresponds to 144–149 (KRKIKS). A helical transmembrane segment spans residues 150–170 (VFIVVLLASLVLLFPNLITVT). Over 171 to 201 (VCETVQANGYRGNLTGKTKRTYFMNLTAMIS) the chain is Extracellular. Asn-183 and Asn-195 each carry an N-linked (GlcNAc...) asparagine glycan. Residues 202–222 (FTLDNIISFTISMVCFLLLIY) traverse the membrane as a helical segment. The Cytoplasmic segment spans residues 223-248 (SLCKHLRTMRLYGKGPHNPSASAHIK). A helical membrane pass occupies residues 249-269 (ALQAVISFLLLFSMFILSLII). Over 270-283 (SGYNYMKPLNEPVH) the chain is Extracellular. The chain crosses the membrane as a helical span at residues 284–304 (LICQLIGTLYPSSHSYVLLWG). Residues 305–330 (NRRIKLAFVLAMVQVRARLWLKEEKP) lie on the Cytoplasmic side of the membrane.

This sequence belongs to the G-protein coupled receptor T2R family.

The protein localises to the membrane. Functionally, putative taste receptor which may play a role in the perception of bitterness. The polypeptide is Taste receptor type 2 member 136 (Rattus norvegicus (Rat)).